The sequence spans 158 residues: 6,7-dimethyl-8-ribityllumazine synthase (158 aa).

5-amino-6-(D-ribitylamino)uracil is bound by residues Phe-23, 61 to 63, and 85 to 87; these read SFE and AVI. 90 to 91 contacts (2S)-2-hydroxy-3-oxobutyl phosphate; sequence DT. His-93 acts as the Proton donor in catalysis. Phe-118 contacts 5-amino-6-(D-ribitylamino)uracil. Arg-132 is a binding site for (2S)-2-hydroxy-3-oxobutyl phosphate.

The protein belongs to the DMRL synthase family.

The enzyme catalyses (2S)-2-hydroxy-3-oxobutyl phosphate + 5-amino-6-(D-ribitylamino)uracil = 6,7-dimethyl-8-(1-D-ribityl)lumazine + phosphate + 2 H2O + H(+). It functions in the pathway cofactor biosynthesis; riboflavin biosynthesis; riboflavin from 2-hydroxy-3-oxobutyl phosphate and 5-amino-6-(D-ribitylamino)uracil: step 1/2. In terms of biological role, catalyzes the formation of 6,7-dimethyl-8-ribityllumazine by condensation of 5-amino-6-(D-ribitylamino)uracil with 3,4-dihydroxy-2-butanone 4-phosphate. This is the penultimate step in the biosynthesis of riboflavin. The sequence is that of 6,7-dimethyl-8-ribityllumazine synthase from Prochlorococcus marinus (strain NATL2A).